Reading from the N-terminus, the 518-residue chain is Probable high-affinity hexose transporter ght7 (518 aa).

Residues 1–27 are Cytoplasmic-facing; it reads MRDFQSRFADRYNQITNSYSYSSSRQG. Residues 28 to 48 traverse the membrane as a helical segment; that stretch reads LITGMVNVGSFFGCLLSSPVA. Over 49–54 the chain is Extracellular; it reads DKIGKR. Residues 55-75 form a helical membrane-spanning segment; sequence LSIIVWTTVYLIGIIIQVTTV. The Cytoplasmic portion of the chain corresponds to 76–77; that stretch reads PS. A helical transmembrane segment spans residues 78–98; the sequence is WVQILVAKIWTGLSIGALSVI. Topologically, residues 99–112 are extracellular; sequence TPGYQSEVAPAIMR. Residues 113–133 traverse the membrane as a helical segment; the sequence is GAIVTTYQLFITLGIFIAACI. Topologically, residues 134–149 are cytoplasmic; the sequence is NMGTHKYSHGTTAQWR. A helical transmembrane segment spans residues 150–170; sequence ISIGINLLWGIITLVGIIFLP. Over 171–236 the chain is Extracellular; the sequence is ESPRYLIAIG…IFNANIRYRT (66 aa). A helical membrane pass occupies residues 237 to 257; it reads FLGMAVMMFQQLTGANYYFYY. The Cytoplasmic segment spans residues 258–271; it reads GTQVFRGTGMDSPY. A helical membrane pass occupies residues 272–292; sequence LAALIPDAVNCGCTFGAIFVL. The Extracellular portion of the chain corresponds to 293-298; it reads EFFGRR. The helical transmembrane segment at 299 to 319 threads the bilayer; it reads SPLIVGGIWQYICFFIYAAVG. At 320 to 333 the chain is on the cytoplasmic side; it reads DRALYHKNGTSNHR. Residues 334 to 354 form a helical membrane-spanning segment; sequence AGAVMIVFSCLFIFSFSQTWA. Topologically, residues 355–374 are extracellular; that stretch reads PAAYVIVGESYPVRYRSKCA. Residues 375–395 form a helical membrane-spanning segment; it reads AVATSANWFWNFLISFFTPFI. Topologically, residues 396 to 402 are cytoplasmic; the sequence is TNSIGFK. Residues 403-423 traverse the membrane as a helical segment; sequence YGYIFASCNLTGAAIIFLFVH. The Extracellular portion of the chain corresponds to 424-518; that stretch reads ETKGRTLEEI…IRPDKREPRL (95 aa). Positions 477-506 are enriched in polar residues; it reads IENTDNQGDSGSFQTSTPDDSRPEQNQASA. The tract at residues 477–518 is disordered; the sequence is IENTDNQGDSGSFQTSTPDDSRPEQNQASATYIRPDKREPRL.

The protein belongs to the major facilitator superfamily. Sugar transporter (TC 2.A.1.1) family.

The protein resides in the membrane. The sequence is that of Probable high-affinity hexose transporter ght7 (ght7) from Schizosaccharomyces pombe (strain 972 / ATCC 24843) (Fission yeast).